Reading from the N-terminus, the 567-residue chain is NADH-ubiquinone oxidoreductase chain 2 (567 aa).

A run of 14 helical transmembrane segments spans residues 2–22 (LILS…IDTI), 43–63 (IGII…LSYI), 85–105 (NIFN…LLSI), 133–153 (LNIY…LLLT), 158–178 (ISIF…TGII), 189–209 (LFYY…ISLL), 236–256 (ILIG…AAPM), 274–294 (YISL…ILNL), 312–332 (LIYI…IGGL), 340–360 (ILAY…LSLI), 372–392 (IIYI…LIIA), 423–443 (LIFC…LFGF), 459–479 (LFLS…YLYF), and 530–550 (VGNY…FNFI).

Belongs to the complex I subunit 2 family.

The protein localises to the mitochondrion inner membrane. The enzyme catalyses a ubiquinone + NADH + 5 H(+)(in) = a ubiquinol + NAD(+) + 4 H(+)(out). Core subunit of the mitochondrial membrane respiratory chain NADH dehydrogenase (Complex I) that is believed to belong to the minimal assembly required for catalysis. Complex I functions in the transfer of electrons from NADH to the respiratory chain. The immediate electron acceptor for the enzyme is believed to be ubiquinone. This Wickerhamomyces canadensis (Yeast) protein is NADH-ubiquinone oxidoreductase chain 2 (ND2).